A 707-amino-acid polypeptide reads, in one-letter code: Choline transporter-like protein 4 (707 aa).

Topologically, residues 1 to 27 (MASEEYGEPAKHDPSFKGPIKKRGCTD) are cytoplasmic. The helical transmembrane segment at 28 to 48 (IICCVLFMVFLLGYMVVGILA) threads the bilayer. Over 49–225 (WLYGDPRQVI…KIFEDFAKSW (177 aa)) the chain is Extracellular. N-linked (GlcNAc...) asparagine glycosylation is found at asparagine 62, asparagine 140, asparagine 176, asparagine 191, and asparagine 196. Residues 226–246 (PWIITALVIAMVVSLLFLILL) form a helical membrane-spanning segment. At 247 to 249 (RFT) the chain is on the cytoplasmic side. A helical membrane pass occupies residues 250–270 (AGILVWVLIVGVIGVIGYGIY). At 271–305 (HCYMEYDTLNKQGVSVSDVGFTFNLGVYFRVKETW) the chain is on the extracellular side. A helical transmembrane segment spans residues 306-326 (LAILIVLAVVEAILLLVLLFL). Residues 327–354 (RKRILIAIALIKEASKAIGHIMSSLFYP) lie on the Cytoplasmic side of the membrane. A helical transmembrane segment spans residues 355–375 (LVTFVLLVVCVAYWGMTALYL). The Extracellular portion of the chain corresponds to 376–442 (ATSGAPIYRI…TNLFNLQIYN (67 aa)). N-linked (GlcNAc...) asparagine glycans are attached at residues asparagine 389, asparagine 397, and asparagine 401. A helical membrane pass occupies residues 443-463 (VIGFLWCINFVIALGQCVLAG). Residues 464–494 (AFASYYWAFHKPKDIPFFPVAESFMRTLRYH) are Cytoplasmic-facing. Residues 495–515 (TGSLAFGSLILTIVQLIRIIL) form a helical membrane-spanning segment. Residues 516–556 (EYVDHKLKGAQNPCTRFLLCCLKCCFWCLEKFIKFLNRNAY) are Extracellular-facing. Residues 557–577 (IMIAVYGKNFCVSAKNAFKLL) form a helical membrane-spanning segment. Topologically, residues 578–593 (MRNIVRVVVLDKVTDL) are cytoplasmic. Residues 594 to 614 (LIFFGKLIVVGGVGVLAFFFF) traverse the membrane as a helical segment. The Extracellular segment spans residues 615–633 (SGRIPIPNDSFKSPTLNYY). An N-linked (GlcNAc...) asparagine glycan is attached at asparagine 622. A helical membrane pass occupies residues 634–654 (WIPIITVVLGSYMIAHGFFSV). Residues 655–707 (YNMCVDTLFLCFLEDLERNDGSQEKPYYMSKSLMSILNKKNRPPKSEEKKKKK) are Cytoplasmic-facing.

This sequence belongs to the CTL (choline transporter-like) family.

It localises to the membrane. The protein localises to the apical cell membrane. It carries out the reaction choline(out) + n H(+)(in) = choline(in) + n H(+)(out). The enzyme catalyses thiamine diphosphate(out) = thiamine diphosphate(in). Its function is as follows. Choline transporter that seems to play a role in the choline-acetylcholine system and is required to the efferent innervation of hair cells in the olivocochlear bundle for the maintenance of physiological function of outer hair cells and the protection of hair cells from acoustic injury. Also described as a thiamine pyrophosphate transporter. Functionally, also described as a thiamine pyrophosphate transporter. The sequence is that of Choline transporter-like protein 4 (slc44a4) from Xenopus laevis (African clawed frog).